The chain runs to 276 residues: Large ribosomal subunit protein uL2 (276 aa).

The tract at residues 223 to 276 (VVMNPVDHPHGGGEGKSSGGRHPVSPWGKKTRGPKTRNNKVTDRLIIRRRNAKR) is disordered. A compositionally biased stretch (basic residues) spans 251–260 (KKTRGPKTRN).

Belongs to the universal ribosomal protein uL2 family. As to quaternary structure, part of the 50S ribosomal subunit. Forms a bridge to the 30S subunit in the 70S ribosome.

Its function is as follows. One of the primary rRNA binding proteins. Required for association of the 30S and 50S subunits to form the 70S ribosome, for tRNA binding and peptide bond formation. It has been suggested to have peptidyltransferase activity; this is somewhat controversial. Makes several contacts with the 16S rRNA in the 70S ribosome. The chain is Large ribosomal subunit protein uL2 from Hyphomonas neptunium (strain ATCC 15444).